The following is a 2117-amino-acid chain: Tudor domain-containing 6 (2117 aa).

Tudor domains lie at 62–118 (DGNP…FFYL), 291–350 (AENL…FFRM), 527–584 (KPVV…FQQL), 757–816 (EPLL…FLKM), and 974–1030 (PQTF…AGDI). The disordered stretch occupies residues 1125–1216 (ASACKKESST…SSKPEVVKPK (92 aa)). The segment covering 1127 to 1152 (ACKKESSTGPKRDAIDQVPKSRESHA) has biased composition (basic and acidic residues). 2 stretches are compositionally biased toward polar residues: residues 1153 to 1174 (IQRS…STNG) and 1181 to 1209 (DSGT…TSSK). Tudor domains are found at residues 1282–1340 (DIHE…FASF) and 1485–1543 (CMPV…LSDV).

As to quaternary structure, interacts (via Tudor domain) with buc (when dimethylated on arginine residues); and may be responsible for recruitment of different protein complexes to germ plasm.

The protein resides in the cytoplasm. Tudor domain-containing protein involved in germ cell development, more specifically the formation of chromatoid body (during spermiogenesis), Balbiani body (during oogenesis), germ plasm (upon fertilization), and for proper miRNA expression and spliceosome maturation. Required for Balbiani body and germ plasm formation and mobility through interaction with dimethylated arginines in the prion-like protein Bucky ball (buc). Coordinates transcript deposition into future primordial germ cells. Interacts with known germ plasm mRNAs such as vasa, dazl, nanos3 and hook2. The sequence is that of Tudor domain-containing 6 from Danio rerio (Zebrafish).